The primary structure comprises 100 residues: uncharacterized protein (100 aa).

A compositionally biased stretch (basic and acidic residues) spans 68–91 (EQYASGAGEKRKEQSSGNSRRKDP). Residues 68 to 100 (EQYASGAGEKRKEQSSGNSRRKDPSLYNWSDVK) form a disordered region.

The protein belongs to the chlamydial CPn_0121/CT_031/TC_0300 family.

This is an uncharacterized protein from Chlamydia muridarum (strain MoPn / Nigg).